We begin with the raw amino-acid sequence, 190 residues long: Ribosome hibernation promotion factor (190 aa).

This sequence belongs to the HPF/YfiA ribosome-associated protein family. Long HPF subfamily. In terms of assembly, interacts with 100S ribosomes.

It localises to the cytoplasm. In terms of biological role, required for dimerization of active 70S ribosomes into 100S ribosomes in stationary phase; 100S ribosomes are translationally inactive and sometimes present during exponential growth. In Staphylococcus aureus (strain COL), this protein is Ribosome hibernation promotion factor.